Consider the following 452-residue polypeptide: MTQKDQSPRVGFVSLGCPKALVDSEQIITQLRAEGYAISGTYDGADLVVVNTCGFIDEAVQESLDAIGEALTENGKVIVTGCLGAKKDAAGHDIVSSVHPKVLAVTGPHALGEVMQAVHTHLPKPHDPFTDLVPAAGIKLTPKHYAYLKISEGCNHRCSFCIIPSMRGDLVSRPVAEVMLEAENLFKAGVKELLVISQDTSAYGVDVKYRTGFWNGRPLKTRMTELVAALGELAAQYGAWVRLHYVYPYPHVDEIIPLMNGGHVLPYLDVPLQHAHPDVLKRMKRPANAEKTLDRIRAWREVCPDLTIRSTFIAGFPGETEAEFETLLDFIAEAELDRVGCFAYSPVEGATANDLPGALPDEVREERRARFMEVAEEVSARRLQRKVGQTLRVLIDEVNQDGGIGRSSADAPEIDGLVYIAPPAKPSQRYRAGDFVQVKITGADGHDLWGEI.

The MTTase N-terminal domain occupies 8 to 123 (PRVGFVSLGC…VMQAVHTHLP (116 aa)). The [4Fe-4S] cluster site is built by C17, C53, C82, C154, C158, and C161. The region spanning 140-381 (LTPKHYAYLK…MEVAEEVSAR (242 aa)) is the Radical SAM core domain. A TRAM domain is found at 384 to 452 (QRKVGQTLRV…ADGHDLWGEI (69 aa)).

This sequence belongs to the methylthiotransferase family. RimO subfamily. [4Fe-4S] cluster serves as cofactor.

It is found in the cytoplasm. It carries out the reaction L-aspartate(89)-[ribosomal protein uS12]-hydrogen + (sulfur carrier)-SH + AH2 + 2 S-adenosyl-L-methionine = 3-methylsulfanyl-L-aspartate(89)-[ribosomal protein uS12]-hydrogen + (sulfur carrier)-H + 5'-deoxyadenosine + L-methionine + A + S-adenosyl-L-homocysteine + 2 H(+). Catalyzes the methylthiolation of an aspartic acid residue of ribosomal protein uS12. The chain is Ribosomal protein uS12 methylthiotransferase RimO from Cupriavidus pinatubonensis (strain JMP 134 / LMG 1197) (Cupriavidus necator (strain JMP 134)).